A 62-amino-acid polypeptide reads, in one-letter code: Omega-conotoxin-like Bu11 (62 aa).

The first 7 residues, 1–7 (ACQLITA), serve as a signal peptide directing secretion. Residues 8-27 (EDSRGTQLHRALRSTSKVSK) constitute a propeptide that is removed on maturation. Intrachain disulfides connect Cys-31/Cys-46, Cys-38/Cys-49, and Cys-45/Cys-56.

The protein belongs to the conotoxin O1 superfamily. As to expression, expressed by the venom duct.

It localises to the secreted. In terms of biological role, omega-conotoxins act at presynaptic membranes, they bind and block voltage-gated calcium channels (Cav). In Conus bullatus (Bubble cone), this protein is Omega-conotoxin-like Bu11.